Consider the following 863-residue polypeptide: Leucine--tRNA ligase (863 aa).

Positions 40-51 match the 'HIGH' region motif; the sequence is PYPSGAGLHVGH. The short motif at 635–639 is the 'KMSKS' region element; the sequence is KMSKS. Lys-638 contacts ATP.

The protein belongs to the class-I aminoacyl-tRNA synthetase family.

It is found in the cytoplasm. It carries out the reaction tRNA(Leu) + L-leucine + ATP = L-leucyl-tRNA(Leu) + AMP + diphosphate. The protein is Leucine--tRNA ligase of Leptospira interrogans serogroup Icterohaemorrhagiae serovar copenhageni (strain Fiocruz L1-130).